A 647-amino-acid chain; its full sequence is Threonine--tRNA ligase (647 aa).

The 61-residue stretch at 1–61 (MIKITFPDGA…EEDGSIEIVT (61 aa)) folds into the TGS domain. The tract at residues 240–538 (DHRKLGKELD…LIETYKGAFP (299 aa)) is catalytic. Residues cysteine 334, histidine 385, and histidine 515 each contribute to the Zn(2+) site.

The protein belongs to the class-II aminoacyl-tRNA synthetase family. As to quaternary structure, homodimer. Zn(2+) is required as a cofactor.

The protein localises to the cytoplasm. The catalysed reaction is tRNA(Thr) + L-threonine + ATP = L-threonyl-tRNA(Thr) + AMP + diphosphate + H(+). Its function is as follows. Catalyzes the attachment of threonine to tRNA(Thr) in a two-step reaction: L-threonine is first activated by ATP to form Thr-AMP and then transferred to the acceptor end of tRNA(Thr). Also edits incorrectly charged L-seryl-tRNA(Thr). The chain is Threonine--tRNA ligase from Streptococcus pyogenes serotype M49 (strain NZ131).